Here is a 443-residue protein sequence, read N- to C-terminus: Dihydroorotase (443 aa).

The Zn(2+) site is built by H80 and H82. Substrate-binding positions include 82 to 84 and N114; that span reads HFR. Positions 170, 197, and 251 each coordinate Zn(2+). A substrate-binding site is contributed by N297. Zn(2+) is bound at residue D324. D324 is a catalytic residue. Residues H328 and 342–343 each bind substrate; that span reads FG.

The protein belongs to the metallo-dependent hydrolases superfamily. DHOase family. Class I DHOase subfamily. It depends on Zn(2+) as a cofactor.

The catalysed reaction is (S)-dihydroorotate + H2O = N-carbamoyl-L-aspartate + H(+). Its pathway is pyrimidine metabolism; UMP biosynthesis via de novo pathway; (S)-dihydroorotate from bicarbonate: step 3/3. Functionally, catalyzes the reversible cyclization of carbamoyl aspartate to dihydroorotate. The chain is Dihydroorotase from Wolbachia sp. subsp. Brugia malayi (strain TRS).